A 316-amino-acid polypeptide reads, in one-letter code: Arginine transport system permease protein ArgU (316 aa).

Residues 1–14 are compositionally biased toward polar residues; the sequence is MSDLNQGPGASTAQ. Residues 1–20 form a disordered region; the sequence is MSDLNQGPGASTAQPKPIEA. The next 6 helical transmembrane spans lie at 29–49, 74–94, 108–128, 151–171, 217–237, and 251–271; these read WVAAAIIVALLAWFIISALNN, IALTLLSMILGVVLGAILAVM, LYLWIFRGTPIYVQLVFWGLL, MFLLAVIGLGLNEAAYMAEIV, LISMLKTTSLVVAIPYSLELY, and VPMLLVAASWYLVITSILMVG. An ABC transmembrane type-1 domain is found at 70–274; it reads ALHTIALTLL…TSILMVGQYY (205 aa).

Belongs to the binding-protein-dependent transport system permease family. As to quaternary structure, the complex is probably composed of two ATP-binding proteins (ArgV), two transmembrane proteins (ArgU) and a solute-binding protein (ArgT).

It localises to the cell membrane. Its function is as follows. Part of the ABC transporter complex ArgTUV involved in L-arginine import. May also transport L-citrulline. Probably responsible for the translocation of the substrate across the membrane. This Corynebacterium glutamicum (strain ATCC 13032 / DSM 20300 / JCM 1318 / BCRC 11384 / CCUG 27702 / LMG 3730 / NBRC 12168 / NCIMB 10025 / NRRL B-2784 / 534) protein is Arginine transport system permease protein ArgU.